A 243-amino-acid polypeptide reads, in one-letter code: 1-(5-phosphoribosyl)-5-[(5-phosphoribosylamino)methylideneamino] imidazole-4-carboxamide isomerase (243 aa).

Residue D17 is the Proton acceptor of the active site. The Proton donor role is filled by D138.

The protein belongs to the HisA/HisF family.

It is found in the cytoplasm. The catalysed reaction is 1-(5-phospho-beta-D-ribosyl)-5-[(5-phospho-beta-D-ribosylamino)methylideneamino]imidazole-4-carboxamide = 5-[(5-phospho-1-deoxy-D-ribulos-1-ylimino)methylamino]-1-(5-phospho-beta-D-ribosyl)imidazole-4-carboxamide. It functions in the pathway amino-acid biosynthesis; L-histidine biosynthesis; L-histidine from 5-phospho-alpha-D-ribose 1-diphosphate: step 4/9. The protein is 1-(5-phosphoribosyl)-5-[(5-phosphoribosylamino)methylideneamino] imidazole-4-carboxamide isomerase of Deinococcus geothermalis (strain DSM 11300 / CIP 105573 / AG-3a).